A 361-amino-acid chain; its full sequence is POU domain, class 3, transcription factor 4 (361 aa).

Disordered stretches follow at residues 99–131 (PHVA…GQPL) and 144–192 (MLEH…PTSD). Residues 119 to 131 (APNSSITSSGQPL) are compositionally biased toward polar residues. Positions 165 to 183 (VLREPPDHGELGSHHCQDH) are enriched in basic and acidic residues. Residues 186-260 (EETPTSDELE…LLNKWLEEAD (75 aa)) enclose the POU-specific domain. Phosphoserine is present on serine 265. The homeobox DNA-binding region spans 278-337 (KRKKRTSIEVSVKGVLETHFLKCPKPAAQEISSLADSLQLEKEVVRVWFCNRRQKEKRMT). Residues 334-361 (KRMTPPGDQQPHEVYSHTVKTDASCHDL) form a disordered region. Residues 343 to 361 (QPHEVYSHTVKTDASCHDL) show a composition bias toward basic and acidic residues.

This sequence belongs to the POU transcription factor family. Class-3 subfamily. In terms of assembly, interacts with HNRNPU. As to expression, brain specific.

The protein resides in the nucleus. Probable transcription factor which exert its primary action widely during early neural development and in a very limited set of neurons in the mature brain. The sequence is that of POU domain, class 3, transcription factor 4 (Pou3f4) from Mus musculus (Mouse).